We begin with the raw amino-acid sequence, 346 residues long: Selenoprotein V (346 aa).

2 disordered regions span residues 1-40 and 151-206; these read MNNQ…VRTR and LDPP…PGPT. A compositionally biased stretch (pro residues) spans 151–162; it reads LDPPPEPAPELP. Positions 270-273 form a cross-link, cysteinyl-selenocysteine (Cys-Sec); redox-active; the sequence is CGLU. A non-standard amino acid (selenocysteine) is located at residue Sec-273.

This sequence belongs to the SelWTH family. Truncated SELENOV proteins produced by failed UGA/Sec decoding are ubiquitinated by the CRL2(APPBP2) complex, which recognizes the glycine (Gly) at the C-terminus of truncated SELENOV proteins. As to expression, testis specific.

Functionally, may be involved in a redox-related process. The polypeptide is Selenoprotein V (Homo sapiens (Human)).